A 192-amino-acid chain; its full sequence is Phosphoheptose isomerase (192 aa).

The SIS domain occupies cysteine 36–alanine 192. Residue asparagine 51–glycine 53 coordinates substrate. Histidine 60 and glutamate 64 together coordinate Zn(2+). Residues glutamate 64, asparagine 93–aspartate 94, threonine 119–serine 121, serine 124, and glutamine 171 each bind substrate. Zn(2+) is bound by residues glutamine 171 and histidine 179.

Belongs to the SIS family. GmhA subfamily. Homotetramer. The cofactor is Zn(2+).

The protein localises to the cytoplasm. It carries out the reaction 2 D-sedoheptulose 7-phosphate = D-glycero-alpha-D-manno-heptose 7-phosphate + D-glycero-beta-D-manno-heptose 7-phosphate. It functions in the pathway carbohydrate biosynthesis; D-glycero-D-manno-heptose 7-phosphate biosynthesis; D-glycero-alpha-D-manno-heptose 7-phosphate and D-glycero-beta-D-manno-heptose 7-phosphate from sedoheptulose 7-phosphate: step 1/1. Catalyzes the isomerization of sedoheptulose 7-phosphate in D-glycero-D-manno-heptose 7-phosphate. This Paramagnetospirillum magneticum (strain ATCC 700264 / AMB-1) (Magnetospirillum magneticum) protein is Phosphoheptose isomerase.